We begin with the raw amino-acid sequence, 130 residues long: Small ribosomal subunit protein uS9 (130 aa).

The tract at residues 105-130 (TRDSRMVERKKPGLKKARRASQFSKR) is disordered. A compositionally biased stretch (basic and acidic residues) spans 106 to 115 (RDSRMVERKK). Residues 116–130 (PGLKKARRASQFSKR) are compositionally biased toward basic residues.

This sequence belongs to the universal ribosomal protein uS9 family.

In Oenococcus oeni (strain ATCC BAA-331 / PSU-1), this protein is Small ribosomal subunit protein uS9.